A 129-amino-acid chain; its full sequence is Ribulose bisphosphate carboxylase small subunit (129 aa).

It belongs to the RuBisCO small chain family. Heterohexadecamer of 8 large and 8 small subunits.

Functionally, ruBisCO catalyzes two reactions: the carboxylation of D-ribulose 1,5-bisphosphate, the primary event in carbon dioxide fixation, as well as the oxidative fragmentation of the pentose substrate. Both reactions occur simultaneously and in competition at the same active site. Although the small subunit is not catalytic it is essential for maximal activity. In Cereibacter sphaeroides (Rhodobacter sphaeroides), this protein is Ribulose bisphosphate carboxylase small subunit.